An 874-amino-acid chain; its full sequence is Alanine--tRNA ligase (874 aa).

Residues histidine 564, histidine 568, cysteine 665, and histidine 669 each coordinate Zn(2+).

The protein belongs to the class-II aminoacyl-tRNA synthetase family. It depends on Zn(2+) as a cofactor.

Its subcellular location is the cytoplasm. It catalyses the reaction tRNA(Ala) + L-alanine + ATP = L-alanyl-tRNA(Ala) + AMP + diphosphate. Catalyzes the attachment of alanine to tRNA(Ala) in a two-step reaction: alanine is first activated by ATP to form Ala-AMP and then transferred to the acceptor end of tRNA(Ala). Also edits incorrectly charged Ser-tRNA(Ala) and Gly-tRNA(Ala) via its editing domain. This Polaromonas naphthalenivorans (strain CJ2) protein is Alanine--tRNA ligase.